A 456-amino-acid chain; its full sequence is Putative sodium-coupled neutral amino acid transporter 11 (456 aa).

Residues 1-25 (MRAGPRRQHLLPPQDNRAAVGYQRQ) form a disordered region. The chain crosses the membrane as a helical span at residues 58-78 (FNVVNSIIGSGIIDFSLILLI). Asparagine 94 carries N-linked (GlcNAc...) asparagine glycosylation. The next 6 helical transmembrane spans lie at 98–118 (GFPGYILLSVLQFLYPFIAMI), 143–163 (VFIGRHFIIGLSTVTFTLPLS), 171–191 (LGKVSLISTGLTTLILGIVMA), 206–226 (AWVFAKPNAIQAVGVMSFAFI), 252–272 (MSIVISVFICIFFATCGYLTF), and 291–313 (VTFGRFCYGVTVILTYPMECFVT). The N-linked (GlcNAc...) asparagine glycan is linked to asparagine 325. The next 3 membrane-spanning stretches (helical) occupy residues 329 to 349 (VFHIVVTVMVITVATLVSLLI), 351 to 371 (CLGIVLELNGVLCATPLIFII), and 390 to 410 (IMSYVMLPIGAAVMVFGFVMA).

Belongs to the amino acid/polyamine transporter 2 family.

Its subcellular location is the membrane. Functionally, putative sodium-dependent amino acid/proton antiporter. This is Putative sodium-coupled neutral amino acid transporter 11 (SLC38A11) from Macaca fascicularis (Crab-eating macaque).